We begin with the raw amino-acid sequence, 271 residues long: uncharacterized protein (271 aa).

Residues 1–202 (MLNSPGTRRP…APSSALSHQG (202 aa)) are disordered. Over residues 10-23 (PVKEAQKYGEDSQK) the composition is skewed to basic and acidic residues. Low complexity-rich tracts occupy residues 33 to 50 (RSSV…SSSP) and 59 to 73 (GRPS…TSAP). Positions 92 to 101 (TRSSANQLPQ) are enriched in polar residues. Residues 121–142 (LRRRSHGDRCVPRSRRRPRPRP) show a composition bias toward basic residues.

This is an uncharacterized protein from Homo sapiens (Human).